The sequence spans 373 residues: Pectin lyase D (373 aa).

Residues 1–19 (MKYAAALTAIAALAARAAA) form the signal peptide. 2 disulfides stabilise this stretch: Cys-82–Cys-101 and Cys-91–Cys-225. The N-linked (GlcNAc...) asparagine glycan is linked to Asn-128. Residue Arg-255 is part of the active site. Asn-274 carries an N-linked (GlcNAc...) asparagine glycan. Cys-321 and Cys-329 form a disulfide bridge. Residue Asn-348 is glycosylated (N-linked (GlcNAc...) asparagine). Low complexity predominate over residues 354 to 366 (LPSADAASTSPAS). The tract at residues 354-373 (LPSADAASTSPASNAGQGNL) is disordered.

The protein belongs to the polysaccharide lyase 1 family. May be O-glycosylated; does not contain N-acetylglucosamine.

The protein resides in the secreted. It catalyses the reaction Eliminative cleavage of (1-&gt;4)-alpha-D-galacturonan methyl ester to give oligosaccharides with 4-deoxy-6-O-methyl-alpha-D-galact-4-enuronosyl groups at their non-reducing ends.. Pectinolytic enzymes consist of four classes of enzymes: pectin lyase, polygalacturonase, pectin methylesterase and rhamnogalacturonase. Among pectinolytic enzymes, pectin lyase is the most important in depolymerization of pectin, since it cleaves internal glycosidic bonds of highly methylated pectins. In Aspergillus niger, this protein is Pectin lyase D (pelD).